Reading from the N-terminus, the 296-residue chain is Bifunctional protein FolD (296 aa).

NADP(+)-binding positions include Gly-170–Ser-172 and Ser-195.

It belongs to the tetrahydrofolate dehydrogenase/cyclohydrolase family. Homodimer.

The catalysed reaction is (6R)-5,10-methylene-5,6,7,8-tetrahydrofolate + NADP(+) = (6R)-5,10-methenyltetrahydrofolate + NADPH. The enzyme catalyses (6R)-5,10-methenyltetrahydrofolate + H2O = (6R)-10-formyltetrahydrofolate + H(+). The protein operates within one-carbon metabolism; tetrahydrofolate interconversion. In terms of biological role, catalyzes the oxidation of 5,10-methylenetetrahydrofolate to 5,10-methenyltetrahydrofolate and then the hydrolysis of 5,10-methenyltetrahydrofolate to 10-formyltetrahydrofolate. The sequence is that of Bifunctional protein FolD from Rhodospirillum rubrum (strain ATCC 11170 / ATH 1.1.1 / DSM 467 / LMG 4362 / NCIMB 8255 / S1).